We begin with the raw amino-acid sequence, 686 residues long: Osmo-dependent choline transporter BetT2 (686 aa).

Residues 1–22 (MATDNPRAVDDQETHPKDRLNR) lie on the Cytoplasmic side of the membrane. A helical transmembrane segment spans residues 23 to 43 (VVFYVSALIILIFSLTTILFN). The Periplasmic portion of the chain corresponds to 44-60 (DFANRALNQVLDWVSST). The chain crosses the membrane as a helical span at residues 61-81 (FSWYYLLAATLYMVFVIFIAC). Residues 82–100 (SRYGNIKLGPKHSKPEFSL) lie on the Cytoplasmic side of the membrane. The chain crosses the membrane as a helical span at residues 101–121 (LSWSAMLFSAGIGIDLMFFSV). Over 122–150 (AEPLSHYMHPPVGEGQTYEAARQGMVWTL) the chain is Periplasmic. A helical membrane pass occupies residues 151–171 (FHYGLTGWCMYALIGMALGYF). Residues 172-203 (SYRYNLPLTIRSALYPIFGKKINGPIGHSVDT) lie on the Cytoplasmic side of the membrane. A helical transmembrane segment spans residues 204 to 224 (AAVIGTIFGIATTCGIGVVQL). Topologically, residues 225-237 (NYGLHVLFDLPEN) are periplasmic. A helical membrane pass occupies residues 238 to 258 (LWVQTALILVAVIITIISVTS). Topologically, residues 259–265 (GVNKGLR) are cytoplasmic. Residues 266 to 286 (ILSEVNIYVSVGLMLFILFLG) form a helical membrane-spanning segment. Residues 287-325 (NTEFLLNALVQNVGDYLSRFPSLALESFAFDQPKEWMNS) lie on the Periplasmic side of the membrane. Residues 326–346 (WTLFFWAWWVAWSPFVGLFLA) form a helical membrane-spanning segment. At 347–356 (RISRGRTIRE) the chain is on the cytoplasmic side. The helical transmembrane segment at 357–377 (FVSGTLIIPLLFTLTWLSIFG) threads the bilayer. Residues 378–412 (NSALHNVIFDGNIALAETVLSNPAHGFYDLLAQYP) lie on the Periplasmic side of the membrane. The helical transmembrane segment at 413–433 (WFPFIAGVATITGLLFYVTSA) threads the bilayer. Topologically, residues 434-459 (DSGALVLGNFTTQFTNIDHDAPRWLS) are cytoplasmic. Residues 460-480 (VFWAVAIGLLTLAMLMTNGIT) traverse the membrane as a helical segment. Topologically, residues 481–484 (ALQN) are periplasmic. Residues 485–505 (ATIIMGLPFSFVMFLVMAGLY) form a helical membrane-spanning segment. Residues 506–686 (KSLRLEDYRQ…NRPLFPDPKA (181 aa)) lie on the Cytoplasmic side of the membrane.

The protein belongs to the BCCT transporter (TC 2.A.15) family.

It is found in the cell inner membrane. Its function is as follows. Uptake of choline in the presence of high salinity. May primarily serve for osmoprotection. This Acinetobacter baylyi (strain ATCC 33305 / BD413 / ADP1) protein is Osmo-dependent choline transporter BetT2.